A 226-amino-acid polypeptide reads, in one-letter code: Phosphoglycolate phosphatase (226 aa).

The active-site Nucleophile is Asp-9. Asp-9 and Asp-11 together coordinate Mg(2+). Lys-150 lines the substrate pocket. Residues Asp-173 and Asp-177 each contribute to the Mg(2+) site.

The protein belongs to the archaeal SPP-like hydrolase family. The cofactor is Mg(2+).

It catalyses the reaction 2-phosphoglycolate + H2O = glycolate + phosphate. In terms of biological role, catalyzes the dephosphorylation of 2-phosphoglycolate. The sequence is that of Phosphoglycolate phosphatase from Methanococcoides burtonii (strain DSM 6242 / NBRC 107633 / OCM 468 / ACE-M).